The primary structure comprises 330 residues: CRISPR-associated endonuclease Cas1 2 (330 aa).

Mn(2+)-binding residues include glutamate 156, histidine 222, and glutamate 237.

This sequence belongs to the CRISPR-associated endonuclease Cas1 family. As to quaternary structure, homodimer, forms a heterotetramer with a Cas2 homodimer. It depends on Mg(2+) as a cofactor. Mn(2+) serves as cofactor.

Functionally, CRISPR (clustered regularly interspaced short palindromic repeat), is an adaptive immune system that provides protection against mobile genetic elements (viruses, transposable elements and conjugative plasmids). CRISPR clusters contain spacers, sequences complementary to antecedent mobile elements, and target invading nucleic acids. CRISPR clusters are transcribed and processed into CRISPR RNA (crRNA). Acts as a dsDNA endonuclease. Involved in the integration of spacer DNA into the CRISPR cassette. The chain is CRISPR-associated endonuclease Cas1 2 from Thermodesulfovibrio yellowstonii (strain ATCC 51303 / DSM 11347 / YP87).